We begin with the raw amino-acid sequence, 628 residues long: Forkhead box protein O (628 aa).

Phosphothreonine; by PKB/AKT1 is present on threonine 50. The residue at position 81 (serine 81) is a Phosphoserine. A DNA-binding region (fork-head) is located at residues 101-207; sequence WGNLSYADLI…ETSRYEKRRG (107 aa). 2 disordered regions span residues 188–210 and 223–270; these read KSVRRRAASMETSRYEKRRGRAK and GLND…SSCG. A Phosphoserine; by PKB/AKT1 modification is found at serine 196. Polar residues-rich tracts occupy residues 227 to 236 and 261 to 270; these read ATPSPSSSVS and RASSNASSCG. Residue serine 264 is modified to Phosphoserine; by PKB/AKT1. Phosphoserine is present on residues serine 267, serine 268, and serine 273. 2 disordered regions span residues 327–373 and 398–451; these read SAAS…SLQP and NSVT…QQQQ. Residues 334–343 are compositionally biased toward pro residues; the sequence is TQPPPPPYPA. Low complexity predominate over residues 344-359; that stretch reads PQQQQQQQPQQQQAYT. Over residues 411–423 the composition is skewed to polar residues; the sequence is SEPSSDSLNTYSN. Residues 438 to 451 are compositionally biased toward low complexity; sequence QQQRQQQQQQQQQQ.

As to quaternary structure, interacts with melt.

It localises to the cytoplasm. The protein localises to the nucleus. Its function is as follows. Transcription factor involved in the regulation of the insulin signaling pathway. Consistently activates both the downstream target Thor\d4EBP and the feedback control target InR. Involved in negative regulation of the cell cycle, modulating cell growth and proliferation. In response to cellular stresses, such as nutrient deprivation or increased levels of reactive oxygen species, foxo is activated and inhibits growth through the action of target genes such as Thor. Foxo activated in the adult fat body can regulate lifespan in adults; an insulin peptide itself may function as one secondary messenger of insulin-regulated aging. Also regulates Lip4, homolog of human acid lipases, thereby acting as a key modulator of lipid metabolism by insulin signaling and integrates insulin responses to glucose and lipid homeostasis. The protein is Forkhead box protein O of Drosophila willistoni (Fruit fly).